The sequence spans 359 residues: MRKIVHVDMDAFYASVEQRDDPSLRGKPVVVAWRGARSVVCAASYEARTFGIRSAMPAVRAERLCPDAVFVPPDFARYKAVSRQVREIFHRHTDLVEPLSLDEAYLDVTEAKTGMQLATEIAQLIRTQIREETQLTASAGIAPNKFLAKIASDWRKPDGQFVIAPSRVDAFLLPLPVNRIPGVGKVMDGKLAALGIVTVSDLRLRPLEELQAHFGSFGQSLYRRARGIDERPVEPDQEVQSVSSEDTFSEDLALDALDPHIQRLAEKTWHATRRTERIGRTVVLKLKTSNFRILTRSYTPEQPPASLQGLVDIALGLTRRVELPPETRYRLVGVGLSGFSDPELQAAVQGELFGEVPQQ.

Residues 4 to 184 form the UmuC domain; that stretch reads IVHVDMDAFY…LPVNRIPGVG (181 aa). Positions 8 and 102 each coordinate Mg(2+). Residue Glu-103 is part of the active site.

It belongs to the DNA polymerase type-Y family. In terms of assembly, monomer. Requires Mg(2+) as cofactor.

It localises to the cytoplasm. It carries out the reaction DNA(n) + a 2'-deoxyribonucleoside 5'-triphosphate = DNA(n+1) + diphosphate. Functionally, poorly processive, error-prone DNA polymerase involved in untargeted mutagenesis. Copies undamaged DNA at stalled replication forks, which arise in vivo from mismatched or misaligned primer ends. These misaligned primers can be extended by PolIV. Exhibits no 3'-5' exonuclease (proofreading) activity. May be involved in translesional synthesis, in conjunction with the beta clamp from PolIII. The sequence is that of DNA polymerase IV from Xanthomonas campestris pv. campestris (strain 8004).